Reading from the N-terminus, the 23-residue chain is LWTRDYAGVYEAIRGFDWSQDAK.

This sequence belongs to the CSN8 family. Component of the CSN complex, probably composed of CSN1, CSN2, CSN3, CSN4, CSN5 (CSN5A or CSN5B), CSN6 (CSN6A or CSN6B), CSN7 and CSN8.

The protein resides in the cytoplasm. It is found in the nucleus. Its function is as follows. Component of the COP9 signalosome complex (CSN), a complex involved in various cellular and developmental processes such as photomorphogenesis and auxin and jasmonate responses. The CSN complex is an essential regulator of the ubiquitin (Ubl) conjugation pathway by mediating the deneddylation of the cullin subunits of SCF-type E3 ligase complexes, leading to decrease the Ubl ligase activity of SCF. It is involved in repression of photomorphogenesis in darkness by regulating the activity of COP1-containing Ubl ligase complexes. This chain is COP9 signalosome complex subunit 8 (CSN8), found in Brassica oleracea (Wild cabbage).